The chain runs to 455 residues: Bifunctional protein GlmU (455 aa).

Residues Met-1–Arg-226 form a pyrophosphorylase region. UDP-N-acetyl-alpha-D-glucosamine contacts are provided by residues Leu-8–Gly-11, Lys-22, Gln-73, Gly-78–Thr-79, Tyr-99–Asp-101, Gly-136, Glu-151, Asn-166, and Asn-224. Position 101 (Asp-101) interacts with Mg(2+). Asn-224 serves as a coordination point for Mg(2+). Positions Thr-227 to Lys-247 are linker. Residues Gly-248–Lys-455 are N-acetyltransferase. Arg-330 and Lys-348 together coordinate UDP-N-acetyl-alpha-D-glucosamine. The active-site Proton acceptor is His-360. UDP-N-acetyl-alpha-D-glucosamine contacts are provided by Tyr-363 and Asn-374. Acetyl-CoA-binding positions include Ala-377, Asn-383 to Tyr-384, Ser-402, Ala-420, and Arg-437.

This sequence in the N-terminal section; belongs to the N-acetylglucosamine-1-phosphate uridyltransferase family. The protein in the C-terminal section; belongs to the transferase hexapeptide repeat family. Homotrimer. The cofactor is Mg(2+).

It is found in the cytoplasm. The catalysed reaction is alpha-D-glucosamine 1-phosphate + acetyl-CoA = N-acetyl-alpha-D-glucosamine 1-phosphate + CoA + H(+). It catalyses the reaction N-acetyl-alpha-D-glucosamine 1-phosphate + UTP + H(+) = UDP-N-acetyl-alpha-D-glucosamine + diphosphate. Its pathway is nucleotide-sugar biosynthesis; UDP-N-acetyl-alpha-D-glucosamine biosynthesis; N-acetyl-alpha-D-glucosamine 1-phosphate from alpha-D-glucosamine 6-phosphate (route II): step 2/2. It functions in the pathway nucleotide-sugar biosynthesis; UDP-N-acetyl-alpha-D-glucosamine biosynthesis; UDP-N-acetyl-alpha-D-glucosamine from N-acetyl-alpha-D-glucosamine 1-phosphate: step 1/1. The protein operates within bacterial outer membrane biogenesis; LPS lipid A biosynthesis. Its function is as follows. Catalyzes the last two sequential reactions in the de novo biosynthetic pathway for UDP-N-acetylglucosamine (UDP-GlcNAc). The C-terminal domain catalyzes the transfer of acetyl group from acetyl coenzyme A to glucosamine-1-phosphate (GlcN-1-P) to produce N-acetylglucosamine-1-phosphate (GlcNAc-1-P), which is converted into UDP-GlcNAc by the transfer of uridine 5-monophosphate (from uridine 5-triphosphate), a reaction catalyzed by the N-terminal domain. This chain is Bifunctional protein GlmU, found in Francisella tularensis subsp. novicida (strain U112).